A 394-amino-acid chain; its full sequence is Protein TsgA homolog (394 aa).

The next 12 membrane-spanning stretches (helical) occupy residues 11-31 (WISY…GMVM), 51-71 (FLNA…EIIP), 76-96 (LMFG…GKSL), 101-121 (LCMF…TFLI), 134-154 (LLFT…VAAM), 162-182 (WYWV…LTLF), 206-226 (IGVL…LGFI), 251-271 (FWTS…FFDL), 274-294 (IVTI…STDN), 302-322 (IMAL…LGSL), 334-354 (FILT…GPIV), and 363-383 (LTTA…LGFV).

This sequence belongs to the major facilitator superfamily. TsgA family.

It localises to the cell inner membrane. The chain is Protein TsgA homolog from Serratia proteamaculans (strain 568).